The chain runs to 344 residues: GTPase Obg (344 aa).

An Obg domain is found at 1–159 (MKFLDLCKVY…RTLWLRLKLI (159 aa)). Residues 126-146 (GNLHFKSSTNQAPRRSNPGQD) form a disordered region. The span at 130–144 (FKSSTNQAPRRSNPG) shows a compositional bias: polar residues. One can recognise an OBG-type G domain in the interval 160 to 327 (ADVGLLGLPN…VLRKLRGEIS (168 aa)). GTP is bound by residues 166-173 (GLPNAGKS), 191-195 (FTTLH), 212-215 (DIPG), 279-282 (NKID), and 308-310 (SGV). 2 residues coordinate Mg(2+): serine 173 and threonine 193.

Belongs to the TRAFAC class OBG-HflX-like GTPase superfamily. OBG GTPase family. In terms of assembly, monomer. Requires Mg(2+) as cofactor.

The protein resides in the cytoplasm. In terms of biological role, an essential GTPase which binds GTP, GDP and possibly (p)ppGpp with moderate affinity, with high nucleotide exchange rates and a fairly low GTP hydrolysis rate. Plays a role in control of the cell cycle, stress response, ribosome biogenesis and in those bacteria that undergo differentiation, in morphogenesis control. The chain is GTPase Obg from Roseobacter denitrificans (strain ATCC 33942 / OCh 114) (Erythrobacter sp. (strain OCh 114)).